The chain runs to 310 residues: 4-hydroxyproline 2-epimerase (310 aa).

The active-site Proton acceptor is the cysteine 88. Substrate-binding positions include 89-90 (GH), histidine 208, and aspartate 232. The active-site Proton donor is cysteine 236. Residue 237-238 (GT) coordinates substrate.

The protein belongs to the proline racemase family.

The enzyme catalyses trans-4-hydroxy-L-proline = cis-4-hydroxy-D-proline. Its function is as follows. Catalyzes the epimerization of trans-4-hydroxy-L-proline (t4LHyp) to cis-4-hydroxy-D-proline (c4DHyp). Is likely involved in a degradation pathway that converts t4LHyp to alpha-ketoglutarate. Displays no proline racemase activity. The protein is 4-hydroxyproline 2-epimerase of Acinetobacter baumannii (strain ATCC 17978 / DSM 105126 / CIP 53.77 / LMG 1025 / NCDC KC755 / 5377).